Reading from the N-terminus, the 152-residue chain is Endoribonuclease YbeY (152 aa).

3 residues coordinate Zn(2+): His-111, His-115, and His-121.

This sequence belongs to the endoribonuclease YbeY family. The cofactor is Zn(2+).

The protein resides in the cytoplasm. Functionally, single strand-specific metallo-endoribonuclease involved in late-stage 70S ribosome quality control and in maturation of the 3' terminus of the 16S rRNA. In Pseudomonas fluorescens (strain ATCC BAA-477 / NRRL B-23932 / Pf-5), this protein is Endoribonuclease YbeY.